A 208-amino-acid polypeptide reads, in one-letter code: ATP phosphoribosyltransferase (208 aa).

It belongs to the ATP phosphoribosyltransferase family. Short subfamily. In terms of assembly, heteromultimer composed of HisG and HisZ subunits.

The protein resides in the cytoplasm. It catalyses the reaction 1-(5-phospho-beta-D-ribosyl)-ATP + diphosphate = 5-phospho-alpha-D-ribose 1-diphosphate + ATP. The protein operates within amino-acid biosynthesis; L-histidine biosynthesis; L-histidine from 5-phospho-alpha-D-ribose 1-diphosphate: step 1/9. In terms of biological role, catalyzes the condensation of ATP and 5-phosphoribose 1-diphosphate to form N'-(5'-phosphoribosyl)-ATP (PR-ATP). Has a crucial role in the pathway because the rate of histidine biosynthesis seems to be controlled primarily by regulation of HisG enzymatic activity. The chain is ATP phosphoribosyltransferase from Thermotoga petrophila (strain ATCC BAA-488 / DSM 13995 / JCM 10881 / RKU-1).